A 333-amino-acid chain; its full sequence is Arylacetonitrilase (333 aa).

One can recognise a CN hydrolase domain in the interval 9 to 284; that stretch reads VRVAVTQAEP…EGIIYADLEM (276 aa). Catalysis depends on Glu49, which acts as the Proton acceptor. Lys129 is a catalytic residue. Residue Cys164 is the Nucleophile of the active site.

This sequence belongs to the carbon-nitrogen hydrolase superfamily. Nitrilase family.

The enzyme catalyses a nitrile + 2 H2O = a carboxylate + NH4(+). It catalyses the reaction 4-chlorophenylacetonitrile + 2 H2O = 4-chlorophenylacetate + NH4(+). Nitrilase that hydrolyzes preferentially phenylacetonitrile, (R,S)-mandelonitrile, and 3-indolylacetonitrile. The chain is Arylacetonitrilase from Aspergillus oryzae (strain ATCC 42149 / RIB 40) (Yellow koji mold).